Consider the following 407-residue polypeptide: Chorismate synthase (407 aa).

NADP(+) contacts are provided by Arg-40 and Arg-46. Residues 135–137, 256–257, Gly-300, 315–319, and Arg-341 each bind FMN; these read RAS, QA, and KPIST.

Belongs to the chorismate synthase family. Homotetramer. It depends on FMNH2 as a cofactor.

The catalysed reaction is 5-O-(1-carboxyvinyl)-3-phosphoshikimate = chorismate + phosphate. It functions in the pathway metabolic intermediate biosynthesis; chorismate biosynthesis; chorismate from D-erythrose 4-phosphate and phosphoenolpyruvate: step 7/7. Functionally, catalyzes the anti-1,4-elimination of the C-3 phosphate and the C-6 proR hydrogen from 5-enolpyruvylshikimate-3-phosphate (EPSP) to yield chorismate, which is the branch point compound that serves as the starting substrate for the three terminal pathways of aromatic amino acid biosynthesis. This reaction introduces a second double bond into the aromatic ring system. This chain is Chorismate synthase, found in Mycobacterium leprae (strain Br4923).